We begin with the raw amino-acid sequence, 248 residues long: MSFVVIIPARFSSTRLPGKPLLDINGKPMIVHVLERARESGAERIIVATDHEDVARAVEAAGGEVCITRADHQSGTERLAEVVEKCGFSDDTVIVNVQGDEPMIPAVIIRQVAENLAQRQVGMATLAAPIHSAEEAFNPNAVKVVLDAEGYALYFSRATIPWDRDRFAKSLETVGDTCLRHLGIYGYRAGFIRRYVSWQPSPLEQIEMLEQLRVLWYGEKIHVAVAKAVPGTGVDTADDLERVRAEMR.

Belongs to the KdsB family.

Its subcellular location is the cytoplasm. The catalysed reaction is 3-deoxy-alpha-D-manno-oct-2-ulosonate + CTP = CMP-3-deoxy-beta-D-manno-octulosonate + diphosphate. It functions in the pathway nucleotide-sugar biosynthesis; CMP-3-deoxy-D-manno-octulosonate biosynthesis; CMP-3-deoxy-D-manno-octulosonate from 3-deoxy-D-manno-octulosonate and CTP: step 1/1. It participates in bacterial outer membrane biogenesis; lipopolysaccharide biosynthesis. Functionally, activates KDO (a required 8-carbon sugar) for incorporation into bacterial lipopolysaccharide in Gram-negative bacteria. This is 3-deoxy-manno-octulosonate cytidylyltransferase from Salmonella arizonae (strain ATCC BAA-731 / CDC346-86 / RSK2980).